Consider the following 74-residue polypeptide: Antimicrobial peptide HsAp4 (74 aa).

The signal sequence occupies residues 1 to 21 (MSRRRILILVLVTMLVKTMAG). Residues 22 to 33 (MESKWVETTYEI) constitute a propeptide that is removed on maturation. Arg-65 is modified (arginine amide). A propeptide spanning residues 69–74 (AISEQT) is cleaved from the precursor.

It belongs to the non-disulfide-bridged peptide (NDBP) superfamily. Medium-length antimicrobial peptide (group 3) family. As to expression, expressed by the venom gland.

It localises to the secreted. It is found in the target cell membrane. Its function is as follows. Possesses antimicrobial activity against both Gram-negative and Gram-positive bacteria, as well as against the fungus C.tropicalis. Also possesses a relatively high hemolytic activity. May act by disrupting the integrity of the bacterial cell membrane. This chain is Antimicrobial peptide HsAp4, found in Heterometrus spinifer (Asia giant forest scorpion).